The following is a 477-amino-acid chain: Aspartyl/glutamyl-tRNA(Asn/Gln) amidotransferase subunit B (477 aa).

This sequence belongs to the GatB/GatE family. GatB subfamily. Heterotrimer of A, B and C subunits.

It carries out the reaction L-glutamyl-tRNA(Gln) + L-glutamine + ATP + H2O = L-glutaminyl-tRNA(Gln) + L-glutamate + ADP + phosphate + H(+). The enzyme catalyses L-aspartyl-tRNA(Asn) + L-glutamine + ATP + H2O = L-asparaginyl-tRNA(Asn) + L-glutamate + ADP + phosphate + 2 H(+). In terms of biological role, allows the formation of correctly charged Asn-tRNA(Asn) or Gln-tRNA(Gln) through the transamidation of misacylated Asp-tRNA(Asn) or Glu-tRNA(Gln) in organisms which lack either or both of asparaginyl-tRNA or glutaminyl-tRNA synthetases. The reaction takes place in the presence of glutamine and ATP through an activated phospho-Asp-tRNA(Asn) or phospho-Glu-tRNA(Gln). The protein is Aspartyl/glutamyl-tRNA(Asn/Gln) amidotransferase subunit B of Lactococcus lactis subsp. cremoris (strain MG1363).